The following is a 558-amino-acid chain: Sinalpyl alcohol oxidase Nec3 (558 aa).

Positions 1-28 (MATMAILQRTFSFILIFSIALHLKSLFA) are cleaved as a signal peptide. 64–65 (TA) provides a ligand contact to FAD. Asparagine 76 carries N-linked (GlcNAc...) asparagine glycosylation. Residues 83–84 (ER), valine 131, serine 135, and 139–142 (NFGF) each bind FAD. N-linked (GlcNAc...) asparagine glycosylation occurs at asparagine 180. Valine 247 lines the FAD pocket. N-linked (GlcNAc...) asparagine glycosylation is found at asparagine 308, asparagine 386, and asparagine 473. An intrachain disulfide couples cysteine 433 to cysteine 484. 492–493 (YH) is a binding site for FAD. Histidine 493 serves as the catalytic Proton donor. Asparagine 531 acts as the Proton acceptor in catalysis. FAD is bound at residue 532–533 (PQ).

The protein belongs to the GMC oxidoreductase family. As to quaternary structure, monomer. Requires FAD as cofactor. In terms of tissue distribution, confined to nectaries.

It catalyses the reaction (E)-sinapyl alcohol + O2 = (E)-sinapaldehyde + H2O2. Its pathway is alkaloid biosynthesis. In terms of biological role, involved in the production of blood-red nectar containing the alkaloid nesocodin and that serves as a visual attractant for pollinator visitation, including vertebrates such as Phelsuma geckos. The nectar is initially acidic and pale yellow, but slowly becomes alkaline before turning into red within 24 hours. Together with NEC1 and NEC2, facilitates the condensation of sinapaldehyde ((E)-3,5-dimethoxy-4-hydroxycinnamaldehyde) and proline to form nesocodin, a pigment with a stable imine bond. Catalyzes the conversion of sinapyl alcohol to sinapaldehyde. The protein is Sinalpyl alcohol oxidase Nec3 of Nesocodon mauritianus (Blue Mauritius bellflower).